Here is a 383-residue protein sequence, read N- to C-terminus: 1-deoxy-D-xylulose 5-phosphate reductoisomerase (383 aa).

NADPH is bound by residues Thr-10, Gly-11, Ser-12, Ile-13, and Asn-123. Residue Lys-124 coordinates 1-deoxy-D-xylulose 5-phosphate. Glu-125 is an NADPH binding site. Asp-149 lines the Mn(2+) pocket. 1-deoxy-D-xylulose 5-phosphate-binding residues include Ser-150, Glu-151, Ser-175, and His-198. Mn(2+) is bound at residue Glu-151. Gly-204 contributes to the NADPH binding site. Residues Ser-211, Asn-216, Lys-217, and Glu-220 each coordinate 1-deoxy-D-xylulose 5-phosphate. Glu-220 lines the Mn(2+) pocket.

This sequence belongs to the DXR family. It depends on Mg(2+) as a cofactor. Mn(2+) is required as a cofactor.

It catalyses the reaction 2-C-methyl-D-erythritol 4-phosphate + NADP(+) = 1-deoxy-D-xylulose 5-phosphate + NADPH + H(+). The protein operates within isoprenoid biosynthesis; isopentenyl diphosphate biosynthesis via DXP pathway; isopentenyl diphosphate from 1-deoxy-D-xylulose 5-phosphate: step 1/6. In terms of biological role, catalyzes the NADPH-dependent rearrangement and reduction of 1-deoxy-D-xylulose-5-phosphate (DXP) to 2-C-methyl-D-erythritol 4-phosphate (MEP). The sequence is that of 1-deoxy-D-xylulose 5-phosphate reductoisomerase from Desulfosudis oleivorans (strain DSM 6200 / JCM 39069 / Hxd3) (Desulfococcus oleovorans).